The sequence spans 220 residues: Protein-L-isoaspartate O-methyltransferase (220 aa).

Residue serine 70 is part of the active site.

Belongs to the methyltransferase superfamily. L-isoaspartyl/D-aspartyl protein methyltransferase family.

Its subcellular location is the cytoplasm. The catalysed reaction is [protein]-L-isoaspartate + S-adenosyl-L-methionine = [protein]-L-isoaspartate alpha-methyl ester + S-adenosyl-L-homocysteine. In terms of biological role, catalyzes the methyl esterification of L-isoaspartyl residues in peptides and proteins that result from spontaneous decomposition of normal L-aspartyl and L-asparaginyl residues. It plays a role in the repair and/or degradation of damaged proteins. The protein is Protein-L-isoaspartate O-methyltransferase of Halorhodospira halophila (strain DSM 244 / SL1) (Ectothiorhodospira halophila (strain DSM 244 / SL1)).